The following is a 344-amino-acid chain: N-acetyl-gamma-glutamyl-phosphate reductase (344 aa).

Residue Cys149 is part of the active site.

It belongs to the NAGSA dehydrogenase family. Type 1 subfamily.

It is found in the cytoplasm. It catalyses the reaction N-acetyl-L-glutamate 5-semialdehyde + phosphate + NADP(+) = N-acetyl-L-glutamyl 5-phosphate + NADPH + H(+). Its pathway is amino-acid biosynthesis; L-arginine biosynthesis; N(2)-acetyl-L-ornithine from L-glutamate: step 3/4. In terms of biological role, catalyzes the NADPH-dependent reduction of N-acetyl-5-glutamyl phosphate to yield N-acetyl-L-glutamate 5-semialdehyde. The polypeptide is N-acetyl-gamma-glutamyl-phosphate reductase (Acidithiobacillus ferrooxidans (strain ATCC 23270 / DSM 14882 / CIP 104768 / NCIMB 8455) (Ferrobacillus ferrooxidans (strain ATCC 23270))).